Here is a 515-residue protein sequence, read N- to C-terminus: Hyccin (515 aa).

Low complexity predominate over residues 358 to 378; it reads STSQSALSNSSNTSSKNLLGK. Disordered stretches follow at residues 358–410 and 491–515; these read STSQ…TQRA and TDLP…LSTD. Positions 389 to 403 are enriched in basic and acidic residues; that stretch reads AGREKEGETCREHLS. A compositionally biased stretch (polar residues) spans 498 to 515; sequence KQPNQQRPPSISITLSTD.

The protein belongs to the Hyccin family. As to quaternary structure, component of a phosphatidylinositol 4-kinase (PI4K) complex.

It localises to the cytoplasm. It is found in the cytosol. Its subcellular location is the cell membrane. Its function is as follows. Component of a complex required to localize phosphatidylinositol 4-kinase (PI4K) to the plasma membrane. The complex acts as a regulator of phosphatidylinositol 4-phosphate (PtdIns(4)P) synthesis. In Gallus gallus (Chicken), this protein is Hyccin (HYCC1).